We begin with the raw amino-acid sequence, 276 residues long: Putative ripening-related protein 5 (276 aa).

An N-terminal signal peptide occupies residues 1–18 (MAMIFLLAALSTTHLASS).

The protein belongs to the kiwellin family.

The protein localises to the secreted. This chain is Putative ripening-related protein 5, found in Oryza sativa subsp. japonica (Rice).